A 33-amino-acid polypeptide reads, in one-letter code: Photosystem II reaction center protein T (33 aa).

A helical membrane pass occupies residues 3 to 23 (ALVYTFLLVSTLGILFFSIFF).

Belongs to the PsbT family. PSII is composed of 1 copy each of membrane proteins PsbA, PsbB, PsbC, PsbD, PsbE, PsbF, PsbH, PsbI, PsbJ, PsbK, PsbL, PsbM, PsbT, PsbY, PsbZ, Psb30/Ycf12, at least 3 peripheral proteins of the oxygen-evolving complex and a large number of cofactors. It forms dimeric complexes.

The protein localises to the plastid. The protein resides in the chloroplast thylakoid membrane. Its function is as follows. Found at the monomer-monomer interface of the photosystem II (PS II) dimer, plays a role in assembly and dimerization of PSII. PSII is a light-driven water plastoquinone oxidoreductase, using light energy to abstract electrons from H(2)O, generating a proton gradient subsequently used for ATP formation. The chain is Photosystem II reaction center protein T from Pelargonium hortorum (Common geranium).